A 156-amino-acid polypeptide reads, in one-letter code: Ribosomal RNA large subunit methyltransferase H (156 aa).

S-adenosyl-L-methionine contacts are provided by residues leucine 73, glycine 104, and 123–128; that span reads ISSLTL.

The protein belongs to the RNA methyltransferase RlmH family. Homodimer.

The protein resides in the cytoplasm. The enzyme catalyses pseudouridine(1915) in 23S rRNA + S-adenosyl-L-methionine = N(3)-methylpseudouridine(1915) in 23S rRNA + S-adenosyl-L-homocysteine + H(+). Specifically methylates the pseudouridine at position 1915 (m3Psi1915) in 23S rRNA. The chain is Ribosomal RNA large subunit methyltransferase H from Herminiimonas arsenicoxydans.